The primary structure comprises 339 residues: Anthranilate phosphoribosyltransferase (339 aa).

5-phospho-alpha-D-ribose 1-diphosphate-binding positions include G79, 82–83 (GD), S87, 89–92 (NIST), 107–115 (KHGNRSISS), and S119. G79 lines the anthranilate pocket. Mg(2+) is bound at residue S91. An anthranilate-binding site is contributed by N110. Anthranilate is bound at residue R165. Mg(2+)-binding residues include D224 and E225.

It belongs to the anthranilate phosphoribosyltransferase family. As to quaternary structure, homodimer. It depends on Mg(2+) as a cofactor.

It catalyses the reaction N-(5-phospho-beta-D-ribosyl)anthranilate + diphosphate = 5-phospho-alpha-D-ribose 1-diphosphate + anthranilate. The protein operates within amino-acid biosynthesis; L-tryptophan biosynthesis; L-tryptophan from chorismate: step 2/5. Catalyzes the transfer of the phosphoribosyl group of 5-phosphorylribose-1-pyrophosphate (PRPP) to anthranilate to yield N-(5'-phosphoribosyl)-anthranilate (PRA). The sequence is that of Anthranilate phosphoribosyltransferase from Listeria monocytogenes serovar 1/2a (strain ATCC BAA-679 / EGD-e).